The chain runs to 231 residues: 7-cyano-7-deazaguanine synthase (231 aa).

Phenylalanine 8 to leucine 18 provides a ligand contact to ATP. Zn(2+) contacts are provided by cysteine 188, cysteine 197, cysteine 200, and cysteine 203.

Belongs to the QueC family. Zn(2+) is required as a cofactor.

It catalyses the reaction 7-carboxy-7-deazaguanine + NH4(+) + ATP = 7-cyano-7-deazaguanine + ADP + phosphate + H2O + H(+). Its pathway is purine metabolism; 7-cyano-7-deazaguanine biosynthesis. Functionally, catalyzes the ATP-dependent conversion of 7-carboxy-7-deazaguanine (CDG) to 7-cyano-7-deazaguanine (preQ(0)). The chain is 7-cyano-7-deazaguanine synthase from Escherichia fergusonii (strain ATCC 35469 / DSM 13698 / CCUG 18766 / IAM 14443 / JCM 21226 / LMG 7866 / NBRC 102419 / NCTC 12128 / CDC 0568-73).